The sequence spans 346 residues: Methylthioribose-1-phosphate isomerase (346 aa).

Residues R45 to A47, R87, and Q194 each bind substrate. The active-site Proton donor is the D235. Substrate is bound at residue N245–K246.

The protein belongs to the eIF-2B alpha/beta/delta subunits family. MtnA subfamily.

It catalyses the reaction 5-(methylsulfanyl)-alpha-D-ribose 1-phosphate = 5-(methylsulfanyl)-D-ribulose 1-phosphate. Its pathway is amino-acid biosynthesis; L-methionine biosynthesis via salvage pathway; L-methionine from S-methyl-5-thio-alpha-D-ribose 1-phosphate: step 1/6. Its function is as follows. Catalyzes the interconversion of methylthioribose-1-phosphate (MTR-1-P) into methylthioribulose-1-phosphate (MTRu-1-P). The sequence is that of Methylthioribose-1-phosphate isomerase from Syntrophomonas wolfei subsp. wolfei (strain DSM 2245B / Goettingen).